Here is a 339-residue protein sequence, read N- to C-terminus: D-erythrose-4-phosphate dehydrogenase (339 aa).

Residues 12–13 and Arg-81 each bind NAD(+); that span reads RI. Residues 154 to 156, Arg-200, 213 to 214, and Arg-236 each bind substrate; these read SCT and TK. The active-site Nucleophile is Cys-155. Position 318 (Asn-318) interacts with NAD(+).

This sequence belongs to the glyceraldehyde-3-phosphate dehydrogenase family. Epd subfamily. Homotetramer.

It localises to the cytoplasm. It catalyses the reaction D-erythrose 4-phosphate + NAD(+) + H2O = 4-phospho-D-erythronate + NADH + 2 H(+). It functions in the pathway cofactor biosynthesis; pyridoxine 5'-phosphate biosynthesis; pyridoxine 5'-phosphate from D-erythrose 4-phosphate: step 1/5. In terms of biological role, catalyzes the NAD-dependent conversion of D-erythrose 4-phosphate to 4-phosphoerythronate. The polypeptide is D-erythrose-4-phosphate dehydrogenase (Escherichia coli O45:K1 (strain S88 / ExPEC)).